A 423-amino-acid chain; its full sequence is Nucleoporin NUP42 (423 aa).

The C3H1-type zinc finger occupies 1–25 (MAICQFFLQGRCRFGDRCWNEHPGA). An FG 1 repeat occupies 14 to 15 (FG). The disordered stretch occupies residues 24 to 85 (GARGAGGGRQ…EKPYFSSFDS (62 aa)). Residues 40–69 (SGNNRRGWNTTSQRYSNVIQPSSFSKSTPW) show a composition bias toward polar residues. Positions 94–170 (GFGLSENPFA…EYHNFLTSNN (77 aa)) are interaction with HIV-1 Vpr. The stretch at 95-96 (FG) is one FG 2 repeat. Phosphoserine is present on Ser-106. 10 FG repeats span residues 218-219 (FG), 220-221 (FG), 265-266 (FG), 271-272 (FG), 288-289 (FG), 290-291 (FG), 311-312 (FG), 336-337 (FG), 345-346 (FG), and 364-365 (FG). Residues 365–423 (GNSSISTSLSASSSIIATDNVLFTPRDKLTVEELEQFQSKKFTLGKIPLKPPPLELLNV) are interaction with GLE1.

In terms of assembly, probable component of the nuclear pore complex (NPC). Interacts with nuclear export protein NXF1. Interacts with GLE1. Able to form a heterotrimer with NUP155 and GLE1 in vitro. Interacts with XPO1. (Microbial infection) Interacts with the HIV-1 virus proteins Rev and Vpr. The interaction with HIV-1 Rev, a protein that mediates nuclear export of unspliced viral RNAs, suggests that its function may be bypassed by the HIV-1 virus. In terms of processing, O-glycosylated. Ubiquitously expressed.

It is found in the nucleus. It localises to the nuclear pore complex. Its subcellular location is the nucleus membrane. Functionally, required for the export of mRNAs containing poly(A) tails from the nucleus into the cytoplasm. (Microbial infection) In case of infection by HIV-1, it may participate in the docking of viral Vpr at the nuclear envelope. The protein is Nucleoporin NUP42 of Homo sapiens (Human).